The sequence spans 162 residues: uncharacterized protein (162 aa).

An HTH asnC-type domain is found at 6–99; it reads LDDLDRAILK…YVTKTLSGFP (94 aa). The H-T-H motif DNA-binding region spans 25-44; that stretch reads IAEISNQLKKPESTVHFRIK.

This is an uncharacterized protein from Pyrococcus horikoshii (strain ATCC 700860 / DSM 12428 / JCM 9974 / NBRC 100139 / OT-3).